We begin with the raw amino-acid sequence, 442 residues long: Glutamate-1-semialdehyde 2,1-aminomutase (442 aa).

Lys-282 bears the N6-(pyridoxal phosphate)lysine mark.

The protein belongs to the class-III pyridoxal-phosphate-dependent aminotransferase family. HemL subfamily. In terms of assembly, homodimer. Pyridoxal 5'-phosphate is required as a cofactor.

The protein resides in the cytoplasm. It catalyses the reaction (S)-4-amino-5-oxopentanoate = 5-aminolevulinate. It participates in porphyrin-containing compound metabolism; protoporphyrin-IX biosynthesis; 5-aminolevulinate from L-glutamyl-tRNA(Glu): step 2/2. This chain is Glutamate-1-semialdehyde 2,1-aminomutase, found in Polaromonas sp. (strain JS666 / ATCC BAA-500).